The following is a 365-amino-acid chain: MPPFLRILGIETSCDETAASIVVRHADGRGEIVSDVVLSQLEEHSAYGGVVPEIAARAHVEALDTLVEEALDQAGVKLADVDAIAATSGPGLIGGLLVGLMTGKAIAKAAGKPLYAINHLEGHALTARLTDGLSFPYLMLLVSGGHTQLVLVRGVGEYERWGTTIDDALGEAFDKTAKLLGLPYPGGPAVENAAAKGDPDRFPLPRPMVGEARLDFSFSGLKTAVRQAATAIAPLSEQDIADICASFQKAVSRTLKDRIGRGLARFKVEFPHINGEPALVVAGGVAANQEIRQTLQALCDTHGFRFVAPPHRLCTDNAAMIAWAGLERMAEGRQADALEVAPRSRWPLDGSAETLIGFGKRGAKA.

The Fe cation site is built by His119 and His123. Residues 141–145 (LVSGG), Asp174, Gly187, and Asn288 contribute to the substrate site. Asp316 is a binding site for Fe cation.

Belongs to the KAE1 / TsaD family. Fe(2+) is required as a cofactor.

The protein resides in the cytoplasm. The enzyme catalyses L-threonylcarbamoyladenylate + adenosine(37) in tRNA = N(6)-L-threonylcarbamoyladenosine(37) in tRNA + AMP + H(+). Required for the formation of a threonylcarbamoyl group on adenosine at position 37 (t(6)A37) in tRNAs that read codons beginning with adenine. Is involved in the transfer of the threonylcarbamoyl moiety of threonylcarbamoyl-AMP (TC-AMP) to the N6 group of A37, together with TsaE and TsaB. TsaD likely plays a direct catalytic role in this reaction. This Agrobacterium fabrum (strain C58 / ATCC 33970) (Agrobacterium tumefaciens (strain C58)) protein is tRNA N6-adenosine threonylcarbamoyltransferase.